The primary structure comprises 208 residues: High frequency lysogenization protein HflD homolog (208 aa).

This sequence belongs to the HflD family.

Its subcellular location is the cytoplasm. The protein localises to the cell inner membrane. The sequence is that of High frequency lysogenization protein HflD homolog from Yersinia enterocolitica serotype O:8 / biotype 1B (strain NCTC 13174 / 8081).